Here is a 782-residue protein sequence, read N- to C-terminus: General transcription and DNA repair factor IIH helicase/translocase subunit XPB (782 aa).

Over residues 1–11 (MGKRDRADREK) the composition is skewed to basic and acidic residues. Residues 1–51 (MGKRDRADREKKKSKKRHYEDEEDEEDDAPGNDTQEAVPSAAGKQVDESGT) are disordered. The Nuclear localization signal motif lies at 6–18 (RADREKKKSKKRH). A compositionally biased stretch (acidic residues) spans 21–30 (DEEDEEDDAP). In terms of domain architecture, Helicase ATP-binding spans 327 to 488 (MFGNGRARSG…DLNFLIGPKL (162 aa)). 340 to 347 (LPCGAGKS) contacts ATP. A DEVH box motif is present at residues 441–444 (DEVH). The Helicase C-terminal domain occupies 542–702 (RACQFLIKFH…LAGMEEEDLA (161 aa)). Phosphoserine is present on S686. Residue S751 is modified to Phosphoserine; by CK2.

It belongs to the helicase family. RAD25/XPB subfamily. Component of the 7-subunit TFIIH core complex composed of XPB/ERCC3, XPD/ERCC2, GTF2H1, GTF2H2, GTF2H3, GTF2H4 and GTF2H5, which is active in NER. The core complex associates with the 3-subunit CDK-activating kinase (CAK) module composed of CCNH/cyclin H, CDK7 and MNAT1 to form the 10-subunit holoenzyme (holo-TFIIH) active in transcription. Interacts with PUF60. Interacts with ATF7IP. Interacts with KAT2A; leading to KAT2A recruitment to promoters and acetylation of histones. Part of TBP-based Pol II pre-initiation complex (PIC), in which Pol II core assembles with general transcription factors and other specific initiation factors including GTF2E1, GTF2E2, GTF2F1, GTF2F2, TCEA1, ERCC2, ERCC3, GTF2H2, GTF2H3, GTF2H4, GTF2H5, GTF2A1, GTF2A2, GTF2B and TBP; this large multi-subunit PIC complex mediates DNA unwinding and targets Pol II core to the transcription start site where the first phosphodiester bond forms. Post-translationally, phosphorylation on Ser-751 by CK2 controls the 5'-excision activity of ERCC1-XPF endonuclease; phosphorylated protein inhibits the excision activity and thus NER. Dephosphorylation reactivates the 5'-excision step. Phosphorylation has no effect on transcription or the 3'-5' helicase activity.

It localises to the nucleus. It carries out the reaction Couples ATP hydrolysis with the unwinding of duplex DNA by translocating in the 3'-5' direction.. The catalysed reaction is ATP + H2O = ADP + phosphate + H(+). With respect to regulation, phosphorylation on Ser-751 by CK2 controls the 5'-excision activity of ERCC1-XPF endonuclease; phosphorylated protein inhibits the excision activity and thus NER. ATPase activity is stimulated by TFIIH subunit p52 (GTF2H4). DNA translocase activity by this subunit in TFIIH is stimulated by XPA, ERCC5/XPG and XFP plus ERCC1. ATP-dependent 3'-5' DNA helicase/translocase; binds dsDNA rather than ssDNA, unzipping it in a translocase rather than classical helicase activity. Component of the general transcription and DNA repair factor IIH (TFIIH) core complex. When complexed to CDK-activating kinase (CAK), involved in RNA transcription by RNA polymerase II. The ATPase activity of XPB/ERCC3, but not its helicase activity, is required for DNA opening; it may wrap around the damaged DNA wedging it open, causing localized melting and twisting that allows XPD/ERCC2 helicase to anchor. The ATP-dependent helicase activity of XPB/ERCC3 may be required for promoter escape. Also involved in transcription-coupled nucleotide excision repair (NER) of damaged DNA. In NER, TFIIH acts by opening DNA around the lesion to allow the excision of the damaged oligonucleotide and its replacement by a new DNA fragment. The structure of the TFIIH transcription complex differs from the NER-TFIIH complex; large movements by XPD/ERCC2 and XPB/ERCC3 are stabilized by XPA. This Bos taurus (Bovine) protein is General transcription and DNA repair factor IIH helicase/translocase subunit XPB (ERCC3).